The primary structure comprises 891 residues: Alanine--tRNA ligase (891 aa).

Residues histidine 564, histidine 568, cysteine 677, and histidine 681 each coordinate Zn(2+).

The protein belongs to the class-II aminoacyl-tRNA synthetase family. It depends on Zn(2+) as a cofactor.

It localises to the cytoplasm. The catalysed reaction is tRNA(Ala) + L-alanine + ATP = L-alanyl-tRNA(Ala) + AMP + diphosphate. In terms of biological role, catalyzes the attachment of alanine to tRNA(Ala) in a two-step reaction: alanine is first activated by ATP to form Ala-AMP and then transferred to the acceptor end of tRNA(Ala). Also edits incorrectly charged Ser-tRNA(Ala) and Gly-tRNA(Ala) via its editing domain. The protein is Alanine--tRNA ligase of Bradyrhizobium sp. (strain ORS 278).